Here is a 433-residue protein sequence, read N- to C-terminus: PBSX phage terminase large subunit (433 aa).

The protein to B.subtilis YqaT and phage SPP1 terminase large subunit. In terms of assembly, dimer of a small and a large subunit.

In terms of biological role, functions as a terminase. The polypeptide is PBSX phage terminase large subunit (xtmB) (Bacillus subtilis (strain 168)).